A 242-amino-acid chain; its full sequence is Lactate utilization protein A 2 (242 aa).

It belongs to the LutA/YkgE family.

Functionally, is involved in L-lactate degradation and allows cells to grow with lactate as the sole carbon source. The protein is Lactate utilization protein A 2 of Bacillus cereus (strain 03BB102).